The sequence spans 517 residues: Retinal dehydrogenase 2 (517 aa).

NAD(+)-binding positions include 184 to 186 (IPW), 210 to 213 (KPAE), and 264 to 266 (STE). Glu-286 serves as the catalytic Proton acceptor. Cys-320 serves as the catalytic Nucleophile. NAD(+) contacts are provided by residues 366–370 (KQYNK) and Glu-417.

Belongs to the aldehyde dehydrogenase family. Homotetramer. Expressed in the high vocal center (HVC) which integrates auditory and motor activities and constitutes a nodal nucleus on the song system.

It is found in the cytoplasm. The enzyme catalyses retinal + NAD(+) + H2O = retinoate + NADH + 2 H(+). It catalyses the reaction all-trans-retinal + NAD(+) + H2O = all-trans-retinoate + NADH + 2 H(+). It carries out the reaction all-trans-13,14-dihydroretinal + NAD(+) + H2O = all-trans-13,14-dihydroretinoate + NADH + 2 H(+). It functions in the pathway cofactor metabolism; retinol metabolism. In terms of biological role, catalyzes the NAD-dependent oxidation of aldehyde substrates, such as all-trans-retinal and all-trans-13,14-dihydroretinal, to their corresponding carboxylic acids, all-trans-retinoate and all-trans-13,14-dihydroretinoate, respectively. Retinoate signaling is critical for the transcriptional control of many genes, for instance it is crucial for initiation of meiosis in both male and female. Recognizes retinal as substrate, both in its free form and when bound to cellular retinol-binding protein. Lacks activity with benzaldehyde, acetaldehyde and octanal. Displays complete lack of activity with citral. Plays a significant role in the acquisition and production of learned songs. The chain is Retinal dehydrogenase 2 (ALDH1A2) from Taeniopygia guttata (Zebra finch).